The chain runs to 153 residues: Small ribosomal subunit protein uS5 (153 aa).

In terms of domain architecture, S5 DRBM spans 15-78; it reads FQEVVVNIGR…DDAFKNLIHV (64 aa).

It belongs to the universal ribosomal protein uS5 family. As to quaternary structure, part of the 30S ribosomal subunit. Contacts proteins S4 and S8.

In terms of biological role, with S4 and S12 plays an important role in translational accuracy. Located at the back of the 30S subunit body where it stabilizes the conformation of the head with respect to the body. The protein is Small ribosomal subunit protein uS5 of Helicobacter pylori (strain P12).